The primary structure comprises 379 residues: tRNA 2-selenouridine synthase (379 aa).

Positions 15 to 138 (FQQNIPLMDV…ARNYLIKQIE (124 aa)) constitute a Rhodanese domain. Residue C98 is the S-selanylcysteine intermediate of the active site.

The protein belongs to the SelU family. Monomer.

The catalysed reaction is 5-methylaminomethyl-2-thiouridine(34) in tRNA + selenophosphate + (2E)-geranyl diphosphate + H2O + H(+) = 5-methylaminomethyl-2-selenouridine(34) in tRNA + (2E)-thiogeraniol + phosphate + diphosphate. It catalyses the reaction 5-methylaminomethyl-2-thiouridine(34) in tRNA + (2E)-geranyl diphosphate = 5-methylaminomethyl-S-(2E)-geranyl-thiouridine(34) in tRNA + diphosphate. The enzyme catalyses 5-methylaminomethyl-S-(2E)-geranyl-thiouridine(34) in tRNA + selenophosphate + H(+) = 5-methylaminomethyl-2-(Se-phospho)selenouridine(34) in tRNA + (2E)-thiogeraniol. It carries out the reaction 5-methylaminomethyl-2-(Se-phospho)selenouridine(34) in tRNA + H2O = 5-methylaminomethyl-2-selenouridine(34) in tRNA + phosphate. Its function is as follows. Involved in the post-transcriptional modification of the uridine at the wobble position (U34) of tRNA(Lys), tRNA(Glu) and tRNA(Gln). Catalyzes the conversion of 2-thiouridine (S2U-RNA) to 2-selenouridine (Se2U-RNA). Acts in a two-step process involving geranylation of 2-thiouridine (S2U) to S-geranyl-2-thiouridine (geS2U) and subsequent selenation of the latter derivative to 2-selenouridine (Se2U) in the tRNA chain. In Bdellovibrio bacteriovorus (strain ATCC 15356 / DSM 50701 / NCIMB 9529 / HD100), this protein is tRNA 2-selenouridine synthase.